The primary structure comprises 350 residues: Glycerol-1-phosphate dehydrogenase [NAD(P)+] (350 aa).

NAD(+) is bound by residues 97–101 and 119–122; these read GSKID and TTPS. Asp-124 serves as a coordination point for substrate. Position 128 (Ser-128) interacts with NAD(+). Asp-171 provides a ligand contact to substrate. Positions 171 and 251 each coordinate Zn(2+). A substrate-binding site is contributed by His-255. His-267 provides a ligand contact to Zn(2+).

It belongs to the glycerol-1-phosphate dehydrogenase family. Requires Zn(2+) as cofactor.

The protein localises to the cytoplasm. It carries out the reaction sn-glycerol 1-phosphate + NAD(+) = dihydroxyacetone phosphate + NADH + H(+). It catalyses the reaction sn-glycerol 1-phosphate + NADP(+) = dihydroxyacetone phosphate + NADPH + H(+). It participates in membrane lipid metabolism; glycerophospholipid metabolism. In terms of biological role, catalyzes the NAD(P)H-dependent reduction of dihydroxyacetonephosphate (DHAP or glycerone phosphate) to glycerol 1-phosphate (G1P). The G1P thus generated is used as the glycerophosphate backbone of phospholipids in the cellular membranes of Archaea. In Picrophilus torridus (strain ATCC 700027 / DSM 9790 / JCM 10055 / NBRC 100828 / KAW 2/3), this protein is Glycerol-1-phosphate dehydrogenase [NAD(P)+].